The following is a 209-amino-acid chain: MARGPLAARGLRLLLPLLPLLPLLPLPQVALGFADGSCDPSDQCPPQARWSSLWHVGLILLAVLLLLLCGVTAGCVRFCCLRKQAQAQPHLPPARQPCDVAVIPMDSDSPVHSTVTSYSSVQYPLGMRLPLPFGELDLDSMAPPAYSLYTPEPPPSYDEAVKMAKPREEGPALSQKPSPLLGASGLETTPVPQESGPNTQLPPCSPGAP.

The N-terminal stretch at 1-32 is a signal peptide; that stretch reads MARGPLAARGLRLLLPLLPLLPLLPLPQVALG. A helical transmembrane segment spans residues 56–76; that stretch reads VGLILLAVLLLLLCGVTAGCV. Residues 145-209 form a disordered region; sequence AYSLYTPEPP…QLPPCSPGAP (65 aa). The segment covering 159–170 has biased composition (basic and acidic residues); that stretch reads EAVKMAKPREEG. A compositionally biased stretch (polar residues) spans 186–202; that stretch reads LETTPVPQESGPNTQLP.

The protein localises to the membrane. This chain is Transmembrane protein 52 (TMEM52), found in Homo sapiens (Human).